Reading from the N-terminus, the 232-residue chain is Probable intron-encoded endonuclease aI3 (232 aa).

It belongs to the LAGLIDADG endonuclease family.

The protein resides in the mitochondrion. In terms of biological role, mitochondrial DNA endonuclease involved in intron homing. In Dictyostelium discoideum (Social amoeba), this protein is Probable intron-encoded endonuclease aI3 (aI3).